The following is a 605-amino-acid chain: Putative zinc finger CCCH domain-containing protein 57 (605 aa).

3 disordered regions span residues 198 to 218 (RHTGHESQNDADDAEQHGREV), 238 to 261 (LLQDDARRRRADAEAEQQGGDGEV), and 375 to 403 (QASHQDLPLQPPQGFPFQQQPQHDGYQQP). Composition is skewed to basic and acidic residues over residues 201–218 (GHESQNDADDAEQHGREV) and 238–250 (LLQDDARRRRADA). The segment covering 389–403 (FPFQQQPQHDGYQQP) has biased composition (low complexity). C3H1-type zinc fingers lie at residues 519–547 (EPKTVMCPDWCRTGHCSSGDGCEYAHSQD) and 557–585 (KYRTEPCRYWLAGKGCWYGDKCRYKQHRL).

The chain is Putative zinc finger CCCH domain-containing protein 57 from Oryza sativa subsp. japonica (Rice).